Reading from the N-terminus, the 234-residue chain is Small ribosomal subunit protein uS3 (234 aa).

The KH type-2 domain maps to I39 to K107.

This sequence belongs to the universal ribosomal protein uS3 family. As to quaternary structure, part of the 30S ribosomal subunit. Forms a tight complex with proteins S10 and S14.

Its function is as follows. Binds the lower part of the 30S subunit head. Binds mRNA in the 70S ribosome, positioning it for translation. The polypeptide is Small ribosomal subunit protein uS3 (Helicobacter pylori (strain P12)).